The sequence spans 35 residues: AIFTIRNNXQQTVXAGAVPVGGGQXLDXGQTXTLD.

This sequence belongs to the thaumatin family.

This chain is Thaumatin-like protein 6, found in Glebionis coronaria (Crown daisy).